Here is a 248-residue protein sequence, read N- to C-terminus: Acyl-coenzyme A thioesterase THEM5 (248 aa).

The active-site Proton donor/acceptor is the Asp167.

The protein belongs to the THEM4/THEM5 thioesterase family. In terms of assembly, homodimer.

It is found in the mitochondrion matrix. The catalysed reaction is hexadecanoyl-CoA + H2O = hexadecanoate + CoA + H(+). It catalyses the reaction (9Z,12Z)-octadecadienoyl-CoA + H2O = (9Z,12Z)-octadecadienoate + CoA + H(+). The enzyme catalyses tetradecanoyl-CoA + H2O = tetradecanoate + CoA + H(+). It carries out the reaction (9Z)-octadecenoyl-CoA + H2O = (9Z)-octadecenoate + CoA + H(+). The catalysed reaction is (9Z)-hexadecenoyl-CoA + H2O = (9Z)-hexadecenoate + CoA + H(+). It catalyses the reaction (5Z,8Z,11Z,14Z)-eicosatetraenoyl-CoA + H2O = (5Z,8Z,11Z,14Z)-eicosatetraenoate + CoA + H(+). The enzyme catalyses octadecanoyl-CoA + H2O = octadecanoate + CoA + H(+). Functionally, has acyl-CoA thioesterase activity towards long-chain (C16 and C18) fatty acyl-CoA substrates, with a preference for linoleoyl-CoA and other unsaturated long-chain fatty acid-CoA esters. Plays an important role in mitochondrial fatty acid metabolism, and in remodeling of the mitochondrial lipid cardiolipin. Required for normal mitochondrial function. This Mus musculus (Mouse) protein is Acyl-coenzyme A thioesterase THEM5 (Them5).